The chain runs to 35 residues: UPF0387 membrane protein YohO (35 aa).

Residues 6–26 (IGVIALFLFMAFGGIGGVMLA) traverse the membrane as a helical segment.

This sequence belongs to the UPF0387 family.

The protein localises to the cell inner membrane. The sequence is that of UPF0387 membrane protein YohO from Escherichia coli O8 (strain IAI1).